A 564-amino-acid chain; its full sequence is Interactor of constitutive active ROPs 3 (564 aa).

2 disordered regions span residues 1–73 (MQTQ…SRIT) and 88–135 (KAKD…SALE). Positions 33–44 (ESSSSPISATNR) are enriched in polar residues. Basic and acidic residues-rich tracts occupy residues 63-73 (VSEKKRPSRIT) and 98-123 (TSKK…KLEE). Coiled coils occupy residues 70 to 133 (SRIT…ETSA) and 231 to 514 (AETE…AATA). Serine 533 bears the Phosphoserine mark.

This sequence belongs to the ICR family. As to quaternary structure, interacts with ARAC11 in vitro. In terms of tissue distribution, expressed in flowers.

In terms of biological role, acts as a scaffold, mediating interaction of ROPs with different proteins. The sequence is that of Interactor of constitutive active ROPs 3 (ICR3) from Arabidopsis thaliana (Mouse-ear cress).